Consider the following 855-residue polypeptide: Circadian locomoter output cycles protein kaput (855 aa).

The Nuclear localization signal signature appears at 32–47 (DKAKRVSRNKSEKKRR). The region spanning 34-84 (AKRVSRNKSEKKRRDQFNVLIKELGSMLPGNARKMDKSTVLQKSIDFLRKH) is the bHLH domain. 2 positions are modified to phosphoserine: S38 and S42. K67 is covalently cross-linked (Glycyl lysine isopeptide (Lys-Gly) (interchain with G-Cter in SUMO1)). 2 PAS domains span residues 107–177 (NEEF…LLES) and 262–332 (FIKE…MQYG). The 44-residue stretch at 336–379 (SCYYRFLTKGQQWIWLQTHYYITYHQWNSRPEFIVCTHTVVSYA) folds into the PAC domain. Residues 371 to 854 (CTHTVVSYAE…SLTDPSKVQP (484 aa)) form an interaction with NR3C1 region. Disordered stretches follow at residues 392–411 (EESL…SDNR) and 420–497 (ALER…LTQP). A Phosphoserine modification is found at S408. S427 is modified (phosphoserine; by GSK3-beta). S431 bears the Phosphoserine mark. The span at 447–463 (DPSSTPTKIPTDTSTPP) shows a compositional bias: polar residues. The interval 450 to 570 (STPTKIPTDT…QGLQMFLQQS (121 aa)) is interaction with SIRT1. Residues T451 and T461 each carry the phosphothreonine; by CDK5 modification. The span at 478-493 (SSFSSQSINSQSVGPS) shows a compositional bias: low complexity. Residues 514–564 (FQFSAQLGAMQHLKDQLEQRTRMIEANIHRQQEELRKIQEQLQMVHGQGLQ) are implicated in the circadian rhythmicity. Disordered regions lie at residues 613–650 (TGQH…SQTP), 752–791 (QQQQ…GQPP), and 814–855 (AFPL…VQPQ). The segment covering 619 to 650 (QQQTLQSTSTQQSQQSVMSGHSQQTSLPSQTP) has biased composition (low complexity). The span at 818-837 (QQSTFPPSHHQQHQPQQQQQ) shows a compositional bias: low complexity. Positions 846–855 (LTDPSKVQPQ) are enriched in polar residues. A Glycyl lysine isopeptide (Lys-Gly) (interchain with G-Cter in SUMO1) cross-link involves residue K851.

As to quaternary structure, component of the circadian clock oscillator which includes the CRY proteins, CLOCK or NPAS2, BMAL1 or BMAL2, CSNK1D and/or CSNK1E, TIMELESS and the PER proteins. Forms a heterodimer with BMAL1. The CLOCK-BMAL1 heterodimer is required for E-box-dependent transactivation, for CLOCK nuclear translocation and degradation, and for phosphorylation of both CLOCK and BMAL1. Interacts with NR3C1 in a ligand-dependent fashion. Interacts with ESR1 and estrogen stimulates this interaction. Interacts with the complex p35/CDK5. Interacts with RELA/p65. Interacts with KAT2B, CREBBP and EP300. Interacts with ID1 and ID3. Interacts with ID2. Interacts with MTA1. Interacts with OGA. Interacts with SIRT1. Interacts with CIPC. Interacts with EZH2. Interacts with EIF4E, PIWIL1 and DDX4. Interacts with PER1, PER2, CRY1 and CRY2 and this interaction requires a translocation to the nucleus. Interaction of the CLOCK-BMAL1 heterodimer with PER or CRY inhibits transcription activation. Interaction of the CLOCK-BMAL1 with CRY1 is independent of DNA but with PER2 is off DNA. The CLOCK-BMAL1 heterodimer interacts with GSK3B. Interacts with KDM5A. Interacts with KMT2A; in a circadian manner. Interacts with MYBBP1A. Interacts with THRAP3. Interacts with MED1; this interaction requires the presence of THRAP3. Interacts with NCOA2. The CLOCK-BMAL1 heterodimer interacts with PASD1. Interacts with NDUFA9. Interacts with IMPDH2; in a circadian manner. Interacts with ASS1; in a circadian manner. Interacts with PIWIL2 (via PIWI domain). Interacts with HNF4A. Ubiquitinated, leading to its proteasomal degradation. In terms of processing, O-glycosylated; contains O-GlcNAc. O-glycosylation by OGT prevents protein degradation by inhibiting ubiquitination. It also stabilizes the CLOCK-BMAL1 heterodimer thereby increasing CLOCK-BMAL1-mediated transcriptional activation of PER1/2/3 and CRY1/2. Post-translationally, phosphorylation is dependent on the CLOCK-BMAL1 heterodimer formation. Phosphorylation enhances the transcriptional activity, alters the subcellular localization and decreases the stability of the heterodimer by promoting its degradation. Phosphorylation shows circadian variations in the liver: the hyperphosphorylated form peaks at midnight (CT18), while the hypophosphorylated form is abundant throughout the day. May be phosphorylated by CSNK1D and CKSN1E. Sumoylation enhances its transcriptional activity and interaction with ESR1, resulting in up-regulation of ESR1 activity. Estrogen stimulates sumoylation. Desumoylation by SENP1 negatively regulates its transcriptional activity. In terms of processing, undergoes lysosome-mediated degradation in a time-dependent manner in the liver. As to expression, expressed equally in brain, eye, testes, ovaries, liver, heart, lung, kidney. In the brain, expression is abundant in the suprachiasmatic nuclei (SCN), in the pyriform cortex, and in the hippocampus. Low expression throughout the rest of the brain. Expression does not appear to undergo circadian oscillations.

The protein resides in the nucleus. Its subcellular location is the cytoplasm. It is found in the cytosol. It catalyses the reaction L-lysyl-[protein] + acetyl-CoA = N(6)-acetyl-L-lysyl-[protein] + CoA + H(+). Its function is as follows. Transcriptional activator which forms a core component of the circadian clock. The circadian clock, an internal time-keeping system, regulates various physiological processes through the generation of approximately 24 hour circadian rhythms in gene expression, which are translated into rhythms in metabolism and behavior. It is derived from the Latin roots 'circa' (about) and 'diem' (day) and acts as an important regulator of a wide array of physiological functions including metabolism, sleep, body temperature, blood pressure, endocrine, immune, cardiovascular, and renal function. Consists of two major components: the central clock, residing in the suprachiasmatic nucleus (SCN) of the brain, and the peripheral clocks that are present in nearly every tissue and organ system. Both the central and peripheral clocks can be reset by environmental cues, also known as Zeitgebers (German for 'timegivers'). The predominant Zeitgeber for the central clock is light, which is sensed by retina and signals directly to the SCN. The central clock entrains the peripheral clocks through neuronal and hormonal signals, body temperature and feeding-related cues, aligning all clocks with the external light/dark cycle. Circadian rhythms allow an organism to achieve temporal homeostasis with its environment at the molecular level by regulating gene expression to create a peak of protein expression once every 24 hours to control when a particular physiological process is most active with respect to the solar day. Transcription and translation of core clock components (CLOCK, NPAS2, BMAL1, BMAL2, PER1, PER2, PER3, CRY1 and CRY2) plays a critical role in rhythm generation, whereas delays imposed by post-translational modifications (PTMs) are important for determining the period (tau) of the rhythms (tau refers to the period of a rhythm and is the length, in time, of one complete cycle). A diurnal rhythm is synchronized with the day/night cycle, while the ultradian and infradian rhythms have a period shorter and longer than 24 hours, respectively. Disruptions in the circadian rhythms contribute to the pathology of cardiovascular diseases, cancer, metabolic syndromes and aging. A transcription/translation feedback loop (TTFL) forms the core of the molecular circadian clock mechanism. Transcription factors, CLOCK or NPAS2 and BMAL1 or BMAL2, form the positive limb of the feedback loop, act in the form of a heterodimer and activate the transcription of core clock genes and clock-controlled genes (involved in key metabolic processes), harboring E-box elements (5'-CACGTG-3') within their promoters. The core clock genes: PER1/2/3 and CRY1/2 which are transcriptional repressors form the negative limb of the feedback loop and interact with the CLOCK|NPAS2-BMAL1|BMAL2 heterodimer inhibiting its activity and thereby negatively regulating their own expression. This heterodimer also activates nuclear receptors NR1D1/2 and RORA/B/G, which form a second feedback loop and which activate and repress BMAL1 transcription, respectively. Regulates the circadian expression of ICAM1, VCAM1, CCL2, THPO and MPL and also acts as an enhancer of the transactivation potential of NF-kappaB. Plays an important role in the homeostatic regulation of sleep. The CLOCK-BMAL1 heterodimer regulates the circadian expression of SERPINE1/PAI1, VWF, B3, CCRN4L/NOC, NAMPT, DBP, MYOD1, PPARGC1A, PPARGC1B, SIRT1, GYS2, F7, NGFR, GNRHR, BHLHE40/DEC1, ATF4, MTA1, KLF10 and also genes implicated in glucose and lipid metabolism. Promotes rhythmic chromatin opening, regulating the DNA accessibility of other transcription factors. May play a role in spermatogenesis; contributes to the chromatoid body assembly and physiology. The CLOCK-BMAL2 heterodimer activates the transcription of SERPINE1/PAI1 and BHLHE40/DEC1. The preferred binding motif for the CLOCK-BMAL1 heterodimer is 5'-CACGTGA-3', which contains a flanking adenine nucleotide at the 3-prime end of the canonical 6-nucleotide E-box sequence. CLOCK specifically binds to the half-site 5'-CAC-3', while BMAL1 binds to the half-site 5'-GTGA-3'. The CLOCK-BMAL1 heterodimer also recognizes the non-canonical E-box motifs 5'-AACGTGA-3' and 5'-CATGTGA-3'. CLOCK has an intrinsic acetyltransferase activity, which enables circadian chromatin remodeling by acetylating histones and nonhistone proteins, including its own partner BMAL1. Represses glucocorticoid receptor NR3C1/GR-induced transcriptional activity by reducing the association of NR3C1/GR to glucocorticoid response elements (GREs) via the acetylation of multiple lysine residues located in its hinge region. The acetyltransferase activity of CLOCK is as important as its transcription activity in circadian control. Acetylates metabolic enzymes IMPDH2 and NDUFA9 in a circadian manner. Facilitated by BMAL1, rhythmically interacts and acetylates argininosuccinate synthase 1 (ASS1) leading to enzymatic inhibition of ASS1 as well as the circadian oscillation of arginine biosynthesis and subsequent ureagenesis. Drives the circadian rhythm of blood pressure through transcriptional activation of ATP1B1. This chain is Circadian locomoter output cycles protein kaput (Clock), found in Mus musculus (Mouse).